Here is a 209-residue protein sequence, read N- to C-terminus: Large ribosomal subunit protein uL3 (209 aa).

Residues 128 to 163 (AHRGPMTHGSKFHRAVGSMGASSDPSRTFKNKRMPG) form a disordered region.

The protein belongs to the universal ribosomal protein uL3 family. Part of the 50S ribosomal subunit. Forms a cluster with proteins L14 and L19.

Its function is as follows. One of the primary rRNA binding proteins, it binds directly near the 3'-end of the 23S rRNA, where it nucleates assembly of the 50S subunit. This chain is Large ribosomal subunit protein uL3, found in Clostridium botulinum (strain 657 / Type Ba4).